Consider the following 232-residue polypeptide: Leucyl/phenylalanyl-tRNA--protein transferase (232 aa).

It belongs to the L/F-transferase family.

The protein resides in the cytoplasm. The enzyme catalyses N-terminal L-lysyl-[protein] + L-leucyl-tRNA(Leu) = N-terminal L-leucyl-L-lysyl-[protein] + tRNA(Leu) + H(+). The catalysed reaction is N-terminal L-arginyl-[protein] + L-leucyl-tRNA(Leu) = N-terminal L-leucyl-L-arginyl-[protein] + tRNA(Leu) + H(+). It catalyses the reaction L-phenylalanyl-tRNA(Phe) + an N-terminal L-alpha-aminoacyl-[protein] = an N-terminal L-phenylalanyl-L-alpha-aminoacyl-[protein] + tRNA(Phe). Functionally, functions in the N-end rule pathway of protein degradation where it conjugates Leu, Phe and, less efficiently, Met from aminoacyl-tRNAs to the N-termini of proteins containing an N-terminal arginine or lysine. This chain is Leucyl/phenylalanyl-tRNA--protein transferase, found in Nitrosospira multiformis (strain ATCC 25196 / NCIMB 11849 / C 71).